Consider the following 329-residue polypeptide: Phospho-N-acetylmuramoyl-pentapeptide-transferase (329 aa).

Transmembrane regions (helical) follow at residues 1 to 21 (MLLN…IGIP), 53 to 73 (MGGF…ALVF), 76 to 96 (FSPA…IGFL), 109 to 129 (GLTA…SYFI), 141 to 161 (ILSW…IWLV), 175 to 195 (GLAS…AVVH), 198 to 218 (YDVL…FVFN), 237 to 257 (FLAI…IGAV), and 309 to 329 (IVFW…YFAF).

It belongs to the glycosyltransferase 4 family. MraY subfamily. The cofactor is Mg(2+).

It is found in the cell membrane. It carries out the reaction UDP-N-acetyl-alpha-D-muramoyl-L-alanyl-gamma-D-glutamyl-L-lysyl-D-alanyl-D-alanine + di-trans,octa-cis-undecaprenyl phosphate = Mur2Ac(oyl-L-Ala-gamma-D-Glu-L-Lys-D-Ala-D-Ala)-di-trans,octa-cis-undecaprenyl diphosphate + UMP. It participates in cell wall biogenesis; peptidoglycan biosynthesis. Catalyzes the initial step of the lipid cycle reactions in the biosynthesis of the cell wall peptidoglycan: transfers peptidoglycan precursor phospho-MurNAc-pentapeptide from UDP-MurNAc-pentapeptide onto the lipid carrier undecaprenyl phosphate, yielding undecaprenyl-pyrophosphoryl-MurNAc-pentapeptide, known as lipid I. This is Phospho-N-acetylmuramoyl-pentapeptide-transferase from Lactococcus lactis subsp. cremoris (strain SK11).